Reading from the N-terminus, the 406-residue chain is 4-hydroxy-3-methylbut-2-enyl diphosphate reductase (406 aa).

Cys66 lines the [4Fe-4S] cluster pocket. His96 contributes to the (2E)-4-hydroxy-3-methylbut-2-enyl diphosphate binding site. His96 contributes to the dimethylallyl diphosphate binding site. His96 lines the isopentenyl diphosphate pocket. Cys157 serves as a coordination point for [4Fe-4S] cluster. His185 is a (2E)-4-hydroxy-3-methylbut-2-enyl diphosphate binding site. His185 contributes to the dimethylallyl diphosphate binding site. Residue His185 coordinates isopentenyl diphosphate. The active-site Proton donor is the Glu187. Position 250 (Thr250) interacts with (2E)-4-hydroxy-3-methylbut-2-enyl diphosphate. Cys288 lines the [4Fe-4S] cluster pocket. Ser317, Ser318, Asn319, and Ser379 together coordinate (2E)-4-hydroxy-3-methylbut-2-enyl diphosphate. 4 residues coordinate dimethylallyl diphosphate: Ser317, Ser318, Asn319, and Ser379. The isopentenyl diphosphate site is built by Ser317, Ser318, Asn319, and Ser379.

Belongs to the IspH family. The cofactor is [4Fe-4S] cluster.

The enzyme catalyses isopentenyl diphosphate + 2 oxidized [2Fe-2S]-[ferredoxin] + H2O = (2E)-4-hydroxy-3-methylbut-2-enyl diphosphate + 2 reduced [2Fe-2S]-[ferredoxin] + 2 H(+). The catalysed reaction is dimethylallyl diphosphate + 2 oxidized [2Fe-2S]-[ferredoxin] + H2O = (2E)-4-hydroxy-3-methylbut-2-enyl diphosphate + 2 reduced [2Fe-2S]-[ferredoxin] + 2 H(+). It participates in isoprenoid biosynthesis; dimethylallyl diphosphate biosynthesis; dimethylallyl diphosphate from (2E)-4-hydroxy-3-methylbutenyl diphosphate: step 1/1. The protein operates within isoprenoid biosynthesis; isopentenyl diphosphate biosynthesis via DXP pathway; isopentenyl diphosphate from 1-deoxy-D-xylulose 5-phosphate: step 6/6. Its function is as follows. Catalyzes the conversion of 1-hydroxy-2-methyl-2-(E)-butenyl 4-diphosphate (HMBPP) into a mixture of isopentenyl diphosphate (IPP) and dimethylallyl diphosphate (DMAPP). Acts in the terminal step of the DOXP/MEP pathway for isoprenoid precursor biosynthesis. The sequence is that of 4-hydroxy-3-methylbut-2-enyl diphosphate reductase from Synechococcus sp. (strain RCC307).